The chain runs to 216 residues: Putative F-box protein At2g03610 (216 aa).

Residues 19–69 (NQDWSKLCPDLLRPILESLSSIDFHRAKTVCSDWYSVWKTCKGYDSKWNQN) enclose the F-box domain.

This chain is Putative F-box protein At2g03610, found in Arabidopsis thaliana (Mouse-ear cress).